The sequence spans 147 residues: MAKEVAGLIKLQIKGGAANPSPPVGPALGSKGINIMEFCKQFNARTQDKAGKILPVIITYYADKSFDFVIKTPPVAIQLLELAKIKSGSAEPNRKKVAEITWEQVRTIAQDKMVDLNCFTIESAMTMVAGTARSMGIAVKGEFPGNN.

It belongs to the universal ribosomal protein uL11 family. As to quaternary structure, part of the ribosomal stalk of the 50S ribosomal subunit. Interacts with L10 and the large rRNA to form the base of the stalk. L10 forms an elongated spine to which L12 dimers bind in a sequential fashion forming a multimeric L10(L12)X complex. In terms of processing, one or more lysine residues are methylated.

In terms of biological role, forms part of the ribosomal stalk which helps the ribosome interact with GTP-bound translation factors. The protein is Large ribosomal subunit protein uL11 of Phocaeicola vulgatus (strain ATCC 8482 / DSM 1447 / JCM 5826 / CCUG 4940 / NBRC 14291 / NCTC 11154) (Bacteroides vulgatus).